Reading from the N-terminus, the 139-residue chain is S-adenosylmethionine decarboxylase proenzyme (139 aa).

The active-site Schiff-base intermediate with substrate; via pyruvic acid is the S63. Position 63 is a pyruvic acid (Ser); by autocatalysis (S63). H68 functions as the Proton acceptor; for processing activity in the catalytic mechanism. The Proton donor; for catalytic activity role is filled by C83.

Belongs to the prokaryotic AdoMetDC family. Type 1 subfamily. As to quaternary structure, heterotetramer of two alpha and two beta chains arranged as a dimer of alpha/beta heterodimers. It depends on pyruvate as a cofactor. Is synthesized initially as an inactive proenzyme. Formation of the active enzyme involves a self-maturation process in which the active site pyruvoyl group is generated from an internal serine residue via an autocatalytic post-translational modification. Two non-identical subunits are generated from the proenzyme in this reaction, and the pyruvate is formed at the N-terminus of the alpha chain, which is derived from the carboxyl end of the proenzyme. The post-translation cleavage follows an unusual pathway, termed non-hydrolytic serinolysis, in which the side chain hydroxyl group of the serine supplies its oxygen atom to form the C-terminus of the beta chain, while the remainder of the serine residue undergoes an oxidative deamination to produce ammonia and the pyruvoyl group blocking the N-terminus of the alpha chain.

The catalysed reaction is S-adenosyl-L-methionine + H(+) = S-adenosyl 3-(methylsulfanyl)propylamine + CO2. It participates in amine and polyamine biosynthesis; S-adenosylmethioninamine biosynthesis; S-adenosylmethioninamine from S-adenosyl-L-methionine: step 1/1. Functionally, catalyzes the decarboxylation of S-adenosylmethionine to S-adenosylmethioninamine (dcAdoMet), the propylamine donor required for the synthesis of the polyamines spermine and spermidine from the diamine putrescine. The chain is S-adenosylmethionine decarboxylase proenzyme from Pyrococcus horikoshii (strain ATCC 700860 / DSM 12428 / JCM 9974 / NBRC 100139 / OT-3).